An 82-amino-acid chain; its full sequence is Omega-conotoxin-like Am6.2 (82 aa).

An N-terminal signal peptide occupies residues 1-22 (MKLTCMMIVAVLFLTAWTFVTA). Residues 23–52 (VPHSSNVLENLYLKARHEMENQEASKLNMR) constitute a propeptide that is removed on maturation. 3 disulfides stabilise this stretch: Cys-56/Cys-73, Cys-63/Cys-77, and Cys-72/Cys-81. A 6'-bromotryptophan; partial; in Am6.2b (major form) modification is found at Trp-76.

This sequence belongs to the conotoxin O1 family. Post-translationally, mostly non-hydroxylated. In terms of processing, two forms of this peptides have been described. Am6.2a (Am3136) is not unmodified, while Am6.2b (Am3214) is Trp-76 brominated. Both forms are found in venom with a much more abundant brominated form. Expressed by the venom duct.

It localises to the secreted. In terms of biological role, omega-conotoxins act at presynaptic membranes, they bind and block voltage-gated calcium channels (Cav). This chain is Omega-conotoxin-like Am6.2, found in Conus amadis (Amadis cone).